The chain runs to 297 residues: Carbamate kinase (297 aa).

The protein belongs to the carbamate kinase family.

The protein localises to the cytoplasm. The enzyme catalyses hydrogencarbonate + NH4(+) + ATP = carbamoyl phosphate + ADP + H2O + H(+). The catalysed reaction is carbamate + ATP = carbamoyl phosphate + ADP. It carries out the reaction hydrogencarbonate + NH4(+) = carbamate + H2O + H(+). The protein operates within nitrogen metabolism; (S)-allantoin degradation. Its function is as follows. Kinase involved in the anaerobic nitrogen utilization via the assimilation of allantoin. Catalyzes the transfer of a phosphate group from carbamoyl phosphate to ADP to produce ATP and leave carbamate, which spontaneously hydrolyzes to ammonia and hydrogencarbonate. This chain is Carbamate kinase, found in Escherichia coli O6:H1 (strain CFT073 / ATCC 700928 / UPEC).